The primary structure comprises 34 residues: Protamine-Z1/Z2 (34 aa).

The tract at residues 1–34 (PRRRRRSSRPVRRRRRYRRSTVARRRRRVVRRRR) is disordered.

In terms of tissue distribution, testis.

Its subcellular location is the nucleus. It is found in the chromosome. Functionally, protamines substitute for histones in the chromatin of sperm during the haploid phase of spermatogenesis. They compact sperm DNA into a highly condensed, stable and inactive complex. In Thunnus thynnus (Atlantic bluefin tuna), this protein is Protamine-Z1/Z2.